Consider the following 637-residue polypeptide: MPNVKLPDGNVKHFEAPLTIYDVAHHISPGLAKAAIAGRVDGVLVDTSYLIKEDCSLIIVTEKHEDSLEIIRHSTAHLLAQAVKALFPSAQVTIGPVIEDGFYYDFAFERSFTPDDLSLIEAKMHELAKANLSITRRELPRNEAIQYFKDLGEEYKAKIIADIPENEALSLYRQGDFEDLCRGPHVPSTGFLKAFKLTKVAGAYWRGDSNNEMLQRIYGTAWADKKSLEEYLFRLEEAEKRDHRKLGKALDLFHFQDIAPGMVFWHPKGWTIYQELEHYMRNRLVDFGYQEIRTPQLVDRSLWEKSGHWANFRDEMFVTETENRHYAVKPMSCPCHVQIYNHGLKSYRDLPLRLSEFGNCHRCEPSGALHGLMRVRNMVQDDAHIFCTEDQIQSEVAMMLELVQSVYKDFGFTEIKYRLALRPEKRVGSDDVWDKAETALKLAMQGRNIEWVDAPGEGAFYGPKIECSLSDCLGRIWQCGTIQVDFSMPARLEASYVAEDGSKQTPVMLHRAILGSFERFMGILIEHYAGKLPLWLSPVQAIVLTISEKQNEYAEKVRKTLQKRGIRANFDLRNEKIGFKIREHTLQKIPYLLVVGDKEVENCQVAVRTRDGIDLGVMTIDTICDTLTQEIIRKGSI.

In terms of domain architecture, TGS spans 1–61; that stretch reads MPNVKLPDGN…KEDCSLIIVT (61 aa). Residues 242–533 are catalytic; sequence DHRKLGKALD…LIEHYAGKLP (292 aa). Zn(2+) is bound by residues cysteine 333, histidine 384, and histidine 510.

It belongs to the class-II aminoacyl-tRNA synthetase family. Homodimer. Zn(2+) serves as cofactor.

It localises to the cytoplasm. The enzyme catalyses tRNA(Thr) + L-threonine + ATP = L-threonyl-tRNA(Thr) + AMP + diphosphate + H(+). In terms of biological role, catalyzes the attachment of threonine to tRNA(Thr) in a two-step reaction: L-threonine is first activated by ATP to form Thr-AMP and then transferred to the acceptor end of tRNA(Thr). Also edits incorrectly charged L-seryl-tRNA(Thr). The chain is Threonine--tRNA ligase from Legionella pneumophila subsp. pneumophila (strain Philadelphia 1 / ATCC 33152 / DSM 7513).